The primary structure comprises 183 residues: uncharacterized protein (183 aa).

This sequence belongs to the asfivirus S183L family.

This is an uncharacterized protein from African swine fever virus (isolate Pig/Kenya/KEN-50/1950) (ASFV).